Consider the following 66-residue polypeptide: MTIINSISNFGSNNSFSNNNTVNQKSVIKRSKQMKNDNTSIGSSFKNDNLLSAHVSGEGVSDCKLL.

Positions 1 to 20 (MTIINSISNFGSNNSFSNNN) are enriched in low complexity. Residues 1 to 47 (MTIINSISNFGSNNSFSNNNTVNQKSVIKRSKQMKNDNTSIGSSFKN) form a disordered region. Residues 36–47 (NDNTSIGSSFKN) show a composition bias toward polar residues.

This is an uncharacterized protein from Dictyostelium discoideum (Social amoeba).